We begin with the raw amino-acid sequence, 189 residues long: Elongation factor P (189 aa).

At lysine 34 the chain carries N6-(3,6-diaminohexanoyl)-5-hydroxylysine.

It belongs to the elongation factor P family. Post-translationally, may be beta-lysylated on the epsilon-amino group of Lys-34 by the combined action of EpmA and EpmB, and then hydroxylated on the C5 position of the same residue by EpmC (if this protein is present). Lysylation is critical for the stimulatory effect of EF-P on peptide-bond formation. The lysylation moiety may extend toward the peptidyltransferase center and stabilize the terminal 3-CCA end of the tRNA. Hydroxylation of the C5 position on Lys-34 may allow additional potential stabilizing hydrogen-bond interactions with the P-tRNA.

It localises to the cytoplasm. It participates in protein biosynthesis; polypeptide chain elongation. Functionally, involved in peptide bond synthesis. Alleviates ribosome stalling that occurs when 3 or more consecutive Pro residues or the sequence PPG is present in a protein, possibly by augmenting the peptidyl transferase activity of the ribosome. Modification of Lys-34 is required for alleviation. The polypeptide is Elongation factor P (Nitrosococcus oceani (strain ATCC 19707 / BCRC 17464 / JCM 30415 / NCIMB 11848 / C-107)).